Here is a 235-residue protein sequence, read N- to C-terminus: Secretory carrier-associated membrane protein 5 (235 aa).

Topologically, residues 1–39 (MAEKVNNFPPLPKFIPLKPCFYQDFEADIPPQHVSMTKR) are cytoplasmic. The chain crosses the membrane as a helical span at residues 40-60 (LYYLWMLNSVTLAVNLVGCLA). Residues 61 to 67 (WLIGGGG) lie on the Extracellular side of the membrane. Residues 68 to 88 (ATNFGLAFLWLILFTPCSYVC) traverse the membrane as a helical segment. Topologically, residues 89-102 (WFRPIYKAFKTDSS) are cytoplasmic. Residues 103 to 125 (FSFMAFFFTFMAQLVISIIQAVG) traverse the membrane as a helical segment. Over 126–148 (IPGWGVCGWIATISFFGTNIGSA) the chain is Extracellular. A helical membrane pass occupies residues 149-169 (VVMLIPTVMFTVMAVFSFIAL). Over 170-235 (SMVHKFYRGS…TPNYTYSNEM (66 aa)) the chain is Cytoplasmic.

Belongs to the SCAMP family. SCAMP5 subfamily. In terms of assembly, interacts (via C-terminal part) with SYT1 and SYT2; interaction with synaptotagmins making a link with the SNARE molecules. Interacts with SLC9A7. As to expression, expressed both by neuronal and non-neuronal tissues. Expressed in brain, stomach, thyroid, spinal cord, lymph node, trachea, adrenal gland, bone marrow and in the different parts of brain. In thyroid tissues, it is expressed by the follicular epithelial cells. In the adrenal gland tissues it is detected in the zona fasciculata of the cortex region (at protein level).

The protein resides in the cell membrane. It is found in the golgi apparatus membrane. Its subcellular location is the golgi apparatus. It localises to the trans-Golgi network membrane. The protein localises to the recycling endosome membrane. The protein resides in the cytoplasmic vesicle. It is found in the secretory vesicle. Its subcellular location is the synaptic vesicle membrane. Its function is as follows. Required for the calcium-dependent exocytosis of signal sequence-containing cytokines such as CCL5. Probably acts in cooperation with the SNARE machinery. May play a role in accumulation of expanded polyglutamine (polyQ) protein huntingtin (HTT) in case of endoplasmic reticulum stress by inhibiting the endocytosis pathway. This chain is Secretory carrier-associated membrane protein 5 (SCAMP5), found in Homo sapiens (Human).